Consider the following 110-residue polypeptide: UPF0060 membrane protein Rpal_4363 (110 aa).

4 helical membrane passes run 4–24, 31–51, 59–79, and 88–108; these read LLTF…FWAW, PLWL…LTLA, AYAA…WAIE, and VIGA…PRAL.

The protein belongs to the UPF0060 family.

It localises to the cell inner membrane. This chain is UPF0060 membrane protein Rpal_4363, found in Rhodopseudomonas palustris (strain TIE-1).